The chain runs to 458 residues: MGIKGLTGLLNEHAPNSIKEHDIKTLFGRKVAIDASMSIYQFLIAVRQRDGEMLTNDAGETTSHLMGFFYRTIRIVENGIKPAYVFDGKPPELKKGVLSKRFEKREEAKEEGEEAKEIGTAEDVDRFSRRTVKVTKQHNEECQKLLRLMGVPCVIAPSEAEAQCAELARGGKVYAAGSEDMDTLTFNAPILFRHLTFSEAKKQPISEINLEAALKGLDMDMSQFVDLCILLGCDYLEPIKGVGPKSALKLIREFGGLKEVVEHLREKAAARKAEAEEEDEEEAEEPAPTSDVEMPDDEDGEKDSDDEEEAERRKKAEAAKKKKAQEKAKSAKKGKGKGKGGIQIPDEWPWEEAKQIFLKPDVIPADQVELEWKNPDVEGLVQFLVTEKGFSEERVRKGAEKLTKFLNAKQQGRLDGFFTVKPKQAPPPAAKGKGAASKGTKRKGEDKAEGSGKKAKKK.

Residues 1–105 (MGIKGLTGLL…GVLSKRFEKR (105 aa)) form an N-domain region. Asp-34 contributes to the Mg(2+) binding site. Residues Arg-47 and Arg-71 each coordinate DNA. 5 residues coordinate Mg(2+): Asp-87, Glu-159, Glu-161, Asp-180, and Asp-182. The tract at residues 123–254 (DVDRFSRRTV…KSALKLIREF (132 aa)) is I-domain. A DNA-binding site is contributed by Glu-159. Residues Gly-232 and Asp-234 each contribute to the DNA site. Residue Asp-234 coordinates Mg(2+). Disordered stretches follow at residues 268–347 (AAAR…IPDE) and 416–458 (GFFT…AKKK). Composition is skewed to acidic residues over residues 275–285 (AEEEDEEEAEE) and 293–309 (EMPD…DEEE). Basic and acidic residues predominate over residues 310 to 329 (AERRKKAEAAKKKKAQEKAK). The interval 410-418 (QQGRLDGFF) is interaction with PCNA. The span at 442-452 (RKGEDKAEGSG) shows a compositional bias: basic and acidic residues.

The protein belongs to the XPG/RAD2 endonuclease family. FEN1 subfamily. In terms of assembly, interacts with PCNA. Three molecules of FEN1 bind to one PCNA trimer with each molecule binding to one PCNA monomer. PCNA stimulates the nuclease activity without altering cleavage specificity. Mg(2+) serves as cofactor. In terms of processing, phosphorylated. Phosphorylation upon DNA damage induces relocalization to the nuclear plasma.

Its subcellular location is the nucleus. The protein localises to the nucleolus. The protein resides in the nucleoplasm. It is found in the mitochondrion. Its function is as follows. Structure-specific nuclease with 5'-flap endonuclease and 5'-3' exonuclease activities involved in DNA replication and repair. During DNA replication, cleaves the 5'-overhanging flap structure that is generated by displacement synthesis when DNA polymerase encounters the 5'-end of a downstream Okazaki fragment. It enters the flap from the 5'-end and then tracks to cleave the flap base, leaving a nick for ligation. Also involved in the long patch base excision repair (LP-BER) pathway, by cleaving within the apurinic/apyrimidinic (AP) site-terminated flap. Acts as a genome stabilization factor that prevents flaps from equilibrating into structures that lead to duplications and deletions. Also possesses 5'-3' exonuclease activity on nicked or gapped double-stranded DNA, and exhibits RNase H activity. Also involved in replication and repair of rDNA and in repairing mitochondrial DNA. This Coprinopsis cinerea (strain Okayama-7 / 130 / ATCC MYA-4618 / FGSC 9003) (Inky cap fungus) protein is Flap endonuclease 1.